Reading from the N-terminus, the 60-residue chain is Large ribosomal subunit protein bL32 (60 aa).

The tract at residues 1 to 60 (MAVQQNKKTPSKRGMHRSHDFLVAPQLSVEQTTGETHMRHHISPNGFYRGRKVLKTKNDE) is disordered. Basic residues predominate over residues 49 to 60 (RGRKVLKTKNDE).

The protein belongs to the bacterial ribosomal protein bL32 family.

This Herminiimonas arsenicoxydans protein is Large ribosomal subunit protein bL32.